The chain runs to 161 residues: Peptidyl-prolyl cis-trans isomerase-like 1 (161 aa).

The 155-residue stretch at 1–155 (MATDVAFDTS…DEVKIIRARV (155 aa)) folds into the PPIase cyclophilin-type domain.

It belongs to the cyclophilin-type PPIase family. PPIL1 subfamily.

The enzyme catalyses [protein]-peptidylproline (omega=180) = [protein]-peptidylproline (omega=0). PPIases accelerate the folding of proteins. It catalyzes the cis-trans isomerization of proline imidic peptide bonds in oligopeptides. The sequence is that of Peptidyl-prolyl cis-trans isomerase-like 1 (cyp1) from Aspergillus oryzae (strain ATCC 42149 / RIB 40) (Yellow koji mold).